The chain runs to 349 residues: Farnesyl pyrophosphate synthase (349 aa).

Residues K48, R51, and Q90 each contribute to the isopentenyl diphosphate site. Mg(2+) is bound by residues D97 and D101. R106 is a binding site for dimethylallyl diphosphate. Residue R107 participates in isopentenyl diphosphate binding. Residues K194, T195, Q234, K251, and K260 each contribute to the dimethylallyl diphosphate site.

It belongs to the FPP/GGPP synthase family. Mg(2+) serves as cofactor.

Its subcellular location is the cytoplasm. The catalysed reaction is isopentenyl diphosphate + dimethylallyl diphosphate = (2E)-geranyl diphosphate + diphosphate. It carries out the reaction isopentenyl diphosphate + (2E)-geranyl diphosphate = (2E,6E)-farnesyl diphosphate + diphosphate. Its pathway is isoprenoid biosynthesis; farnesyl diphosphate biosynthesis; farnesyl diphosphate from geranyl diphosphate and isopentenyl diphosphate: step 1/1. It participates in isoprenoid biosynthesis; geranyl diphosphate biosynthesis; geranyl diphosphate from dimethylallyl diphosphate and isopentenyl diphosphate: step 1/1. Functionally, catalyzes the sequential condensation of isopentenyl pyrophosphate with the allylic pyrophosphates, dimethylallyl pyrophosphate, and then with the resultant geranylpyrophosphate to the ultimate product farnesyl pyrophosphate. This chain is Farnesyl pyrophosphate synthase (FPS1), found in Kluyveromyces lactis (strain ATCC 8585 / CBS 2359 / DSM 70799 / NBRC 1267 / NRRL Y-1140 / WM37) (Yeast).